The primary structure comprises 165 residues: 3-isopropylmalate dehydratase small subunit (165 aa).

It belongs to the LeuD family. LeuD type 2 subfamily. Heterodimer of LeuC and LeuD.

It carries out the reaction (2R,3S)-3-isopropylmalate = (2S)-2-isopropylmalate. The protein operates within amino-acid biosynthesis; L-leucine biosynthesis; L-leucine from 3-methyl-2-oxobutanoate: step 2/4. In terms of biological role, catalyzes the isomerization between 2-isopropylmalate and 3-isopropylmalate, via the formation of 2-isopropylmaleate. This is 3-isopropylmalate dehydratase small subunit from Halothermothrix orenii (strain H 168 / OCM 544 / DSM 9562).